The chain runs to 254 residues: 3-deoxy-manno-octulosonate cytidylyltransferase (254 aa).

This sequence belongs to the KdsB family.

The protein localises to the cytoplasm. The catalysed reaction is 3-deoxy-alpha-D-manno-oct-2-ulosonate + CTP = CMP-3-deoxy-beta-D-manno-octulosonate + diphosphate. The protein operates within nucleotide-sugar biosynthesis; CMP-3-deoxy-D-manno-octulosonate biosynthesis; CMP-3-deoxy-D-manno-octulosonate from 3-deoxy-D-manno-octulosonate and CTP: step 1/1. Its pathway is bacterial outer membrane biogenesis; lipopolysaccharide biosynthesis. Functionally, activates KDO (a required 8-carbon sugar) for incorporation into bacterial lipopolysaccharide in Gram-negative bacteria. The chain is 3-deoxy-manno-octulosonate cytidylyltransferase from Chlamydia trachomatis serovar A (strain ATCC VR-571B / DSM 19440 / HAR-13).